The following is a 309-amino-acid chain: uncharacterized protein (309 aa).

It belongs to the anthranilate phosphoribosyltransferase family.

This is an uncharacterized protein from Aquifex aeolicus (strain VF5).